The sequence spans 353 residues: Protein U67 (353 aa).

This sequence belongs to the herpesviridae UL95 family.

This Human herpesvirus 6A (strain Uganda-1102) (HHV-6 variant A) protein is Protein U67 (U67).